The sequence spans 828 residues: Outer membrane usher protein PmfC (828 aa).

The first 28 residues, 1–28 (MLIPYSPHTIWKTICATLLLSLAFFSQA), serve as a signal peptide directing secretion.

The protein belongs to the fimbrial export usher family.

It localises to the cell outer membrane. In terms of biological role, involved in the export and assembly of PMF fimbrial subunits across the outer membrane. The sequence is that of Outer membrane usher protein PmfC (pmfC) from Proteus mirabilis (strain HI4320).